A 110-amino-acid polypeptide reads, in one-letter code: Iron-sulfur cluster assembly protein CyaY (110 aa).

Belongs to the frataxin family.

Functionally, involved in iron-sulfur (Fe-S) cluster assembly. May act as a regulator of Fe-S biogenesis. The polypeptide is Iron-sulfur cluster assembly protein CyaY (Pseudomonas syringae pv. tomato (strain ATCC BAA-871 / DC3000)).